The primary structure comprises 556 residues: MDIRRIVLYMALALIGLSLWNAWQIDYPAKQPVEEKTASQLTSDGHLLPQIIPSNAEQPITLKAEEKASSSKQLIQVKTDVLDVDIDLKNGDIVKGLLLDYPLSVEDKNKPFPLLQNQASQRYVANSSLFILDGQTPQSLDFDFTSEKEYYELKSDQNQLIVTLNGKSEDGLDVKKEFVFTKGSYLIEVNYKIANTGNSLWKGYFNTQLLRSSPKEDKSSIFHIGSYTGASFSNPGKNRYQKVSFSDMSKSNLDVDAKGGWIAMQQHYFLSAWVPNADSENKFYTLATDKDYTIGAVSQPITVKPKEDKIVGSKLYIGPEITSVLKGISPSLDLTVDYGILWFLSSLLFSLMKAIYTVVGNWGWSIVLVTVLIKLAFYRLSATSYKSMASMRKLQPKLQALRERYGDDKAKISQATMELYKQEKVNPLGGCLPILIQIPVFIALYWVLLESVELRQAPFIFWINDLASADPYHVLPLIMGATMLIQQKLNPAPADPMQAKVMMFLPILFTGLFWNFPSGLVLYWIVNNTLSILQQWYITRKYSDEKPAKKVVATAK.

A run of 5 helical transmembrane segments spans residues Ile-6–Asp-26, Leu-332–Met-352, Val-358–Tyr-378, Leu-428–Leu-448, and Val-501–Val-521.

Belongs to the OXA1/ALB3/YidC family. Type 1 subfamily. As to quaternary structure, interacts with the Sec translocase complex via SecD. Specifically interacts with transmembrane segments of nascent integral membrane proteins during membrane integration.

The protein localises to the cell inner membrane. Functionally, required for the insertion and/or proper folding and/or complex formation of integral membrane proteins into the membrane. Involved in integration of membrane proteins that insert both dependently and independently of the Sec translocase complex, as well as at least some lipoproteins. Aids folding of multispanning membrane proteins. In Legionella pneumophila (strain Paris), this protein is Membrane protein insertase YidC.